A 205-amino-acid chain; its full sequence is Small ribosomal subunit protein uS4 (205 aa).

The segment covering 1–16 (MSKRESSKYKIDRRMG) has biased composition (basic and acidic residues). Positions 1–46 (MSKRESSKYKIDRRMGENIWGRPKSPVNRREYGPGQHGQRRKSKLS) are disordered. Residues 94-157 (SRLDAIVYRA…KQLVSVLESV (64 aa)) enclose the S4 RNA-binding domain.

The protein belongs to the universal ribosomal protein uS4 family. In terms of assembly, part of the 30S ribosomal subunit. Contacts protein S5. The interaction surface between S4 and S5 is involved in control of translational fidelity.

In terms of biological role, one of the primary rRNA binding proteins, it binds directly to 16S rRNA where it nucleates assembly of the body of the 30S subunit. Functionally, with S5 and S12 plays an important role in translational accuracy. This chain is Small ribosomal subunit protein uS4, found in Sinorhizobium fredii (strain NBRC 101917 / NGR234).